Reading from the N-terminus, the 184-residue chain is MGLWDALLNWLRSLFFKQEMELSLIGLQNAGKTSLVNVVATGGYSEDMIPTVGFNMRKVTKGSVTIKLWDLGGQPRFRSMWERYCRSVSAIVYVVDAADPDNLSVSKSELHDLLSKTSLNGIPLLVLGNKIDKPGALSKEALTDEMGLKSLTDREVCCFMISCKNSTNIDQVIDWLVKHSKSSN.

The note=Mediates targeting to membranes intramembrane region spans 1–18 (MGLWDALLNWLRSLFFKQ). Residues 29-34 (NAGKTS), 48-51 (MIPT), 70-74 (DLGGQ), and 129-132 (NKID) each bind GTP.

This sequence belongs to the small GTPase superfamily. Arf family. As to quaternary structure, interacts with tubulin.

The protein localises to the late endosome membrane. It localises to the lysosome membrane. Its subcellular location is the cytoplasm. The protein resides in the cytoskeleton. It is found in the spindle. In terms of biological role, may play a role in lysosome motility. May play a role in chromosome segregation. (Microbial infection) Component of tomato mosaic virus (ToMV) RNA replication complexes. Required for tobamovirus multiplication, especially for efficient negative-strand RNA synthesis and viral RNA capping. This chain is ADP-ribosylation factor-like protein 8b, found in Arabidopsis thaliana (Mouse-ear cress).